The following is a 750-amino-acid chain: Penicillin-binding protein 2x (750 aa).

A helical transmembrane segment spans residues 29-49; the sequence is LSLLSVFVFAIFLVNFAVIIG. Residue serine 337 is the Acyl-ester intermediate of the active site. PASTA domains are found at residues 632 to 691 and 692 to 750; these read QQSP…ILSD and KAEE…TLGD.

Belongs to the transpeptidase family.

It localises to the cell membrane. Functionally, a transpeptidase that forms peptide cross-links between adjacent glycan strands in cell wall peptidoglycan (PG). Part of the divisome machinery that synthesizes the septal cross wall. Beta-lactams inactivate the PBPs by acylating an essential serine residue in the active site of these proteins. The chain is Penicillin-binding protein 2x (pbpX) from Streptococcus pneumoniae serotype 4 (strain ATCC BAA-334 / TIGR4).